The sequence spans 274 residues: Lectizyme (274 aa).

An N-terminal signal peptide occupies residues methionine 1–alanine 16. The region spanning isoleucine 32–glutamate 268 is the Peptidase S1 domain. Cysteine 57 and cysteine 73 form a disulfide bridge. Active-site charge relay system residues include histidine 72 and aspartate 119. 2 cysteine pairs are disulfide-bonded: cysteine 188/cysteine 204 and cysteine 215/cysteine 244. Residue serine 219 is the Charge relay system of the active site.

It belongs to the peptidase S1 family. In terms of tissue distribution, expressed in the midgut.

The protein resides in the secreted. Its function is as follows. Protein with lectin and protease activity involved in the establishment of trypanosome infections in tsetse flies. Binds D-glucosamine and agglutinates bloodstream-form trypanosomes and rabbit red blood cells. Capable of inducing transformation of bloodstream-form trypanosomes into procyclic (midgut) forms in vitro. In Glossina austeni (Savannah tsetse fly), this protein is Lectizyme (Gpl).